A 601-amino-acid chain; its full sequence is Elongation factor 4 (601 aa).

One can recognise a tr-type G domain in the interval 7 to 189; that stretch reads DRIRNFSIIA…ALVTRLPAPK (183 aa). GTP contacts are provided by residues 19–24 and 136–139; these read DHGKST and NKVD.

It belongs to the TRAFAC class translation factor GTPase superfamily. Classic translation factor GTPase family. LepA subfamily.

The protein localises to the cell inner membrane. It catalyses the reaction GTP + H2O = GDP + phosphate + H(+). In terms of biological role, required for accurate and efficient protein synthesis under certain stress conditions. May act as a fidelity factor of the translation reaction, by catalyzing a one-codon backward translocation of tRNAs on improperly translocated ribosomes. Back-translocation proceeds from a post-translocation (POST) complex to a pre-translocation (PRE) complex, thus giving elongation factor G a second chance to translocate the tRNAs correctly. Binds to ribosomes in a GTP-dependent manner. The protein is Elongation factor 4 of Granulibacter bethesdensis (strain ATCC BAA-1260 / CGDNIH1).